A 385-amino-acid chain; its full sequence is 4-hydroxy-3-methylbut-2-en-1-yl diphosphate synthase (flavodoxin) (385 aa).

[4Fe-4S] cluster-binding residues include C282, C285, C317, and E324.

It belongs to the IspG family. Requires [4Fe-4S] cluster as cofactor.

It catalyses the reaction (2E)-4-hydroxy-3-methylbut-2-enyl diphosphate + oxidized [flavodoxin] + H2O + 2 H(+) = 2-C-methyl-D-erythritol 2,4-cyclic diphosphate + reduced [flavodoxin]. The protein operates within isoprenoid biosynthesis; isopentenyl diphosphate biosynthesis via DXP pathway; isopentenyl diphosphate from 1-deoxy-D-xylulose 5-phosphate: step 5/6. Functionally, converts 2C-methyl-D-erythritol 2,4-cyclodiphosphate (ME-2,4cPP) into 1-hydroxy-2-methyl-2-(E)-butenyl 4-diphosphate. In Nocardia farcinica (strain IFM 10152), this protein is 4-hydroxy-3-methylbut-2-en-1-yl diphosphate synthase (flavodoxin).